A 101-amino-acid chain; its full sequence is Transcription and mRNA export factor SUS1 (101 aa).

Belongs to the ENY2 family. In terms of assembly, component of the nuclear pore complex (NPC)-associated TREX-2 complex (transcription and export complex 2), composed of at least SUS1, SAC3, THP1, SEM1, and CDC31. TREX-2 contains 2 SUS1 chains. The TREX-2 complex interacts with the nucleoporin NUP1. Component of the 1.8 MDa SAGA transcription coactivator-HAT complex. SAGA is built of 5 distinct domains with specialized functions. Within the SAGA complex, SUS1, SGF11, SGF73 and UBP8 form an additional subcomplex of SAGA called the DUB module (deubiquitination module). Interacts directly with THP1, SAC3, SGF11, and with the RNA polymerase II.

Its subcellular location is the nucleus. The protein localises to the nucleoplasm. It localises to the cytoplasm. It is found in the P-body. Involved in mRNA export coupled transcription activation by association with both the TREX-2 and the SAGA complexes. At the promoters, SAGA is required for recruitment of the basal transcription machinery. It influences RNA polymerase II transcriptional activity through different activities such as TBP interaction and promoter selectivity, interaction with transcription activators, and chromatin modification through histone acetylation and deubiquitination. Within the SAGA complex, participates in a subcomplex required for deubiquitination of H2B and for the maintenance of steady-state H3 methylation levels. The TREX-2 complex functions in docking export-competent ribonucleoprotein particles (mRNPs) to the nuclear entrance of the nuclear pore complex (nuclear basket). TREX-2 participates in mRNA export and accurate chromatin positioning in the nucleus by tethering genes to the nuclear periphery. May also be involved in cytoplasmic mRNA decay by interaction with components of P-bodies. This Debaryomyces hansenii (strain ATCC 36239 / CBS 767 / BCRC 21394 / JCM 1990 / NBRC 0083 / IGC 2968) (Yeast) protein is Transcription and mRNA export factor SUS1.